Reading from the N-terminus, the 229-residue chain is Cytochrome c oxidase subunit 2 (229 aa).

The Mitochondrial intermembrane portion of the chain corresponds to 1–14 (MANHLQFNFQDATS). The helical transmembrane segment at 15–45 (PLMQELVKFHDHSLTILFFISALILYVLMMT) threads the bilayer. Residues 46-59 (SLSKLTNKNILDSQ) lie on the Mitochondrial matrix side of the membrane. A helical transmembrane segment spans residues 60 to 87 (EIEMVWTVIPAFILIMLALPSIQILYLM). Topologically, residues 88 to 229 (DEIASPDITI…FESWIIKLSL (142 aa)) are mitochondrial intermembrane. Cu cation is bound by residues H162, C197, E199, C201, H205, and M208. E199 serves as a coordination point for Mg(2+).

It belongs to the cytochrome c oxidase subunit 2 family. Component of the cytochrome c oxidase (complex IV, CIV), a multisubunit enzyme composed of 14 subunits. The complex is composed of a catalytic core of 3 subunits MT-CO1, MT-CO2 and MT-CO3, encoded in the mitochondrial DNA, and 11 supernumerary subunits COX4I, COX5A, COX5B, COX6A, COX6B, COX6C, COX7A, COX7B, COX7C, COX8 and NDUFA4, which are encoded in the nuclear genome. The complex exists as a monomer or a dimer and forms supercomplexes (SCs) in the inner mitochondrial membrane with NADH-ubiquinone oxidoreductase (complex I, CI) and ubiquinol-cytochrome c oxidoreductase (cytochrome b-c1 complex, complex III, CIII), resulting in different assemblies (supercomplex SCI(1)III(2)IV(1) and megacomplex MCI(2)III(2)IV(2)). Found in a complex with TMEM177, COA6, COX18, COX20, SCO1 and SCO2. Interacts with TMEM177 in a COX20-dependent manner. Interacts with COX20. Interacts with COX16. It depends on Cu cation as a cofactor.

It is found in the mitochondrion inner membrane. It carries out the reaction 4 Fe(II)-[cytochrome c] + O2 + 8 H(+)(in) = 4 Fe(III)-[cytochrome c] + 2 H2O + 4 H(+)(out). Its function is as follows. Component of the cytochrome c oxidase, the last enzyme in the mitochondrial electron transport chain which drives oxidative phosphorylation. The respiratory chain contains 3 multisubunit complexes succinate dehydrogenase (complex II, CII), ubiquinol-cytochrome c oxidoreductase (cytochrome b-c1 complex, complex III, CIII) and cytochrome c oxidase (complex IV, CIV), that cooperate to transfer electrons derived from NADH and succinate to molecular oxygen, creating an electrochemical gradient over the inner membrane that drives transmembrane transport and the ATP synthase. Cytochrome c oxidase is the component of the respiratory chain that catalyzes the reduction of oxygen to water. Electrons originating from reduced cytochrome c in the intermembrane space (IMS) are transferred via the dinuclear copper A center (CU(A)) of subunit 2 and heme A of subunit 1 to the active site in subunit 1, a binuclear center (BNC) formed by heme A3 and copper B (CU(B)). The BNC reduces molecular oxygen to 2 water molecules using 4 electrons from cytochrome c in the IMS and 4 protons from the mitochondrial matrix. This Myxine glutinosa (Atlantic hagfish) protein is Cytochrome c oxidase subunit 2 (MT-CO2).